We begin with the raw amino-acid sequence, 452 residues long: UDP-N-acetylmuramoyl-L-alanine--L-glutamate ligase (452 aa).

An ATP-binding site is contributed by 118–124; sequence GSKGKST.

Belongs to the MurCDEF family. MurD2 subfamily.

The protein resides in the cytoplasm. The enzyme catalyses UDP-N-acetyl-alpha-D-muramoyl-L-alanine + L-glutamate + ATP = UDP-N-acetyl-alpha-D-muramoyl-L-alanyl-L-glutamate + ADP + phosphate + H(+). Its pathway is cell wall biogenesis; peptidoglycan biosynthesis. Cell wall formation. Catalyzes the addition of L-glutamate to the nucleotide precursor UDP-N-acetylmuramoyl-L-alanine. The chain is UDP-N-acetylmuramoyl-L-alanine--L-glutamate ligase from Micromonospora sp. (strain ATCC 39149 / NRRL 15099 / SCC 1413).